The primary structure comprises 431 residues: UDP-N-acetylglucosamine 1-carboxyvinyltransferase (431 aa).

22–23 (KN) provides a ligand contact to phosphoenolpyruvate. Residue Arg102 participates in UDP-N-acetyl-alpha-D-glucosamine binding. Residue Cys126 is the Proton donor of the active site. At Cys126 the chain carries 2-(S-cysteinyl)pyruvic acid O-phosphothioketal. Residues Asp318 and Ile340 each coordinate UDP-N-acetyl-alpha-D-glucosamine.

The protein belongs to the EPSP synthase family. MurA subfamily.

It localises to the cytoplasm. It catalyses the reaction phosphoenolpyruvate + UDP-N-acetyl-alpha-D-glucosamine = UDP-N-acetyl-3-O-(1-carboxyvinyl)-alpha-D-glucosamine + phosphate. It participates in cell wall biogenesis; peptidoglycan biosynthesis. In terms of biological role, cell wall formation. Adds enolpyruvyl to UDP-N-acetylglucosamine. This is UDP-N-acetylglucosamine 1-carboxyvinyltransferase from Bartonella quintana (strain Toulouse) (Rochalimaea quintana).